Consider the following 183-residue polypeptide: Ly6/PLAUR domain-containing protein 6B (183 aa).

A signal peptide spans 1-39; the sequence is MLYKSSDRPAHKVSMLLLCHALAIAVVQIVIFSESWAFA. In terms of domain architecture, UPAR/Ly6 spans 60 to 151; that stretch reads FKCFTCENAG…VELPTNHTNA (92 aa). Positions 60 to 154 are sufficient for inhibiting alpha-7 nAChR currents; sequence FKCFTCENAG…PTNHTNAVFA (95 aa). 6 cysteine pairs are disulfide-bonded: cysteine 62-cysteine 90, cysteine 65-cysteine 74, cysteine 83-cysteine 109, cysteine 115-cysteine 134, cysteine 120-cysteine 131, and cysteine 135-cysteine 140. Serine 164 carries GPI-anchor amidated serine lipidation. Positions 165–183 are cleaved as a propeptide — removed in mature form; that stretch reads SAPTLYLPVLAWVFVLPLL.

The protein resides in the cell membrane. Functionally, likely acts as a modulator of nicotinic acetylcholine receptors (nAChRs) activity. In vitro acts on nAChRs in a subtype- and stoichiometry-dependent manner. Modulates specifically alpha-3(3):beta-4(2) nAChRs by enhancing the sensitivity to ACh, decreasing ACh-induced maximal current response and increasing the rate of desensitization to ACh; has no effect on alpha-7 homomeric nAChRs; modulates alpha-3(2):alpha-5:beta-4(2) nAChRs in the context of CHRNA5/alpha-5 variant Asn-398 but not its wild-type sequence. However, according to another report in vitro it can weakly inhibits alpha-7 nAChRs. The polypeptide is Ly6/PLAUR domain-containing protein 6B (LYPD6B) (Homo sapiens (Human)).